A 700-amino-acid chain; its full sequence is Putative glutamine-dependent NAD(+) synthetase (700 aa).

The CN hydrolase domain maps to 5 to 275 (VTIASCQLNQ…VEVISATVDV (271 aa)). Residue Glu45 is the Proton acceptor; for glutaminase activity of the active site. Residue Lys114 is the For glutaminase activity of the active site. The active-site Nucleophile; for glutaminase activity is Cys175. The tract at residues 327 to 700 (IPLPEEEITF…ASKFEQHQRK (374 aa)) is ligase. 357–364 (PLSGGLDS) is a binding site for ATP. Residue Ser359 is part of the active site.

It in the C-terminal section; belongs to the NAD synthetase family.

It carries out the reaction deamido-NAD(+) + L-glutamine + ATP + H2O = L-glutamate + AMP + diphosphate + NAD(+) + H(+). Its pathway is cofactor biosynthesis; NAD(+) biosynthesis; NAD(+) from deamido-NAD(+) (L-Gln route): step 1/1. The polypeptide is Putative glutamine-dependent NAD(+) synthetase (Schizosaccharomyces pombe (strain 972 / ATCC 24843) (Fission yeast)).